The primary structure comprises 222 residues: MSKKLANFAQKRWISCSSNSFNMYDPRVFREPVSNVQELRKPLDVDDERNFLFLKAMKSDATPVFYRDSVIDKLIRVCTKDGEKETSRKNVLSALEIIKRRQYKAWTKANDEEKKSIELDPFVIARKGIKNCHPLMKLQGVTRGGTTYQVPFPIEEPEAEFRAMKMMRDICRVRAKHGETHFKDILATELLAASQNEGSTITAKQELHKTCEANRAYAHYRA.

The transit peptide at 1–14 directs the protein to the mitochondrion; the sequence is MSKKLANFAQKRWI.

The protein belongs to the universal ribosomal protein uS7 family. Component of the mitochondrial ribosome small subunit (28S) which comprises a 12S rRNA and about 30 distinct proteins.

The protein resides in the mitochondrion. The polypeptide is Small ribosomal subunit protein uS7m (mrps-7) (Caenorhabditis briggsae).